The primary structure comprises 226 residues: Thioredoxin domain-containing protein 9 (226 aa).

The region spanning Glu75–Gly180 is the Thioredoxin domain. Phosphoserine is present on residues Ser188, Ser221, and Ser223.

Forms ternary complexes with the chaperonin TCP1 complex, spanning the cylindrical chaperonin cavity and contacting at least 2 subunits.

It is found in the cytoplasm. The protein localises to the nucleus. The protein resides in the cytoskeleton. It localises to the microtubule organizing center. Its subcellular location is the centrosome. It is found in the midbody. In terms of biological role, significantly diminishes the chaperonin TCP1 complex ATPase activity, thus negatively impacts protein folding, including that of actin or tubulin. The protein is Thioredoxin domain-containing protein 9 (Txndc9) of Rattus norvegicus (Rat).